The primary structure comprises 719 residues: Polyribonucleotide nucleotidyltransferase (719 aa).

Residues D507 and D513 each contribute to the Mg(2+) site. Positions 573-633 (PKLELFSVDP…EQIKAAKDYI (61 aa)) constitute a KH domain. The 62-residue stretch at 658 to 719 (GQEFQGIVKK…NGKISVDLCE (62 aa)) folds into the S1 motif domain.

This sequence belongs to the polyribonucleotide nucleotidyltransferase family. Mg(2+) is required as a cofactor.

The protein resides in the cytoplasm. It catalyses the reaction RNA(n+1) + phosphate = RNA(n) + a ribonucleoside 5'-diphosphate. Its function is as follows. Involved in mRNA degradation. Catalyzes the phosphorolysis of single-stranded polyribonucleotides processively in the 3'- to 5'-direction. In Campylobacter jejuni (strain RM1221), this protein is Polyribonucleotide nucleotidyltransferase.